The following is a 305-amino-acid chain: 2-aminophenol 1,6-dioxygenase beta subunit (305 aa).

3 residues coordinate Fe cation: His-14, His-63, and His-196.

Belongs to the LigB/MhpB extradiol dioxygenase family. In terms of assembly, heterotetramer of 2 alpha and 2 beta subunits. Fe(2+) serves as cofactor.

It carries out the reaction 2-aminophenol + O2 = 2-aminomuconate 6-semialdehyde. Strongly inhibited by CuSO(4), FeCl(3), K(3)[Fe(CN)(6)], AgNO3, HgCl(2) and MnCl(2). Component of the 2-aminophenol 1,6-dioxygenase complex that catalyzes the ring fission of 2-aminophenol to produce 2-aminomuconic 6-semialdehyde. AmnB seems to be the catalytic subunit of the complex. The enzyme is also active toward 2-amino-p-cresol, 6-amino-m-cresol, 2-amino-m-cresol, 2-amino-4,5-dimethylphenol, 2-amino-4-chlorophenol, and catechol. The polypeptide is 2-aminophenol 1,6-dioxygenase beta subunit (amnB) (Pseudomonas sp).